Reading from the N-terminus, the 503-residue chain is Maturase K (503 aa).

It belongs to the intron maturase 2 family. MatK subfamily.

It is found in the plastid. It localises to the chloroplast. In terms of biological role, usually encoded in the trnK tRNA gene intron. Probably assists in splicing its own and other chloroplast group II introns. This Backhousia myrtifolia (Grey myrtle) protein is Maturase K.